Reading from the N-terminus, the 221-residue chain is Esterase C25G4.2 (221 aa).

Active-site charge relay system residues include serine 106, aspartate 166, and histidine 194.

Belongs to the LovG family.

The polypeptide is Esterase C25G4.2 (Caenorhabditis elegans).